Consider the following 307-residue polypeptide: Aspartate carbamoyltransferase catalytic subunit (307 aa).

Residues Arg55 and Thr56 each contribute to the carbamoyl phosphate site. An L-aspartate-binding site is contributed by Lys85. Arg106, His135, and Gln138 together coordinate carbamoyl phosphate. L-aspartate contacts are provided by Arg168 and Arg230. Positions 268 and 269 each coordinate carbamoyl phosphate.

Belongs to the aspartate/ornithine carbamoyltransferase superfamily. ATCase family. Heterododecamer (2C3:3R2) of six catalytic PyrB chains organized as two trimers (C3), and six regulatory PyrI chains organized as three dimers (R2).

It carries out the reaction carbamoyl phosphate + L-aspartate = N-carbamoyl-L-aspartate + phosphate + H(+). Its pathway is pyrimidine metabolism; UMP biosynthesis via de novo pathway; (S)-dihydroorotate from bicarbonate: step 2/3. In terms of biological role, catalyzes the condensation of carbamoyl phosphate and aspartate to form carbamoyl aspartate and inorganic phosphate, the committed step in the de novo pyrimidine nucleotide biosynthesis pathway. This chain is Aspartate carbamoyltransferase catalytic subunit, found in Photorhabdus laumondii subsp. laumondii (strain DSM 15139 / CIP 105565 / TT01) (Photorhabdus luminescens subsp. laumondii).